Reading from the N-terminus, the 320-residue chain is Glutaminase (320 aa).

7 residues coordinate substrate: serine 70, asparagine 121, glutamate 165, asparagine 172, tyrosine 196, tyrosine 248, and valine 266.

This sequence belongs to the glutaminase family. In terms of assembly, homotetramer.

The catalysed reaction is L-glutamine + H2O = L-glutamate + NH4(+). The protein is Glutaminase of Mycobacterium marinum (strain ATCC BAA-535 / M).